The sequence spans 405 residues: uncharacterized protein (405 aa).

This is an uncharacterized protein from Equine herpesvirus 2 (strain 86/87) (EHV-2).